Here is a 116-residue protein sequence, read N- to C-terminus: Phycoerythrin alpha-3 subunit (116 aa).

The (2R,3E)-phycoerythrobilin site is built by Ser-53, Glu-63, Arg-64, Cys-67, and Lys-85.

It belongs to the phycoerythrin family. Heterotetramer of 2 different alpha chains and 2 identical beta chains which form 2 alpha-beta heterodimers within the heterotetramer. The two alpha-beta heterodimers are rotated to an open configuration in contrast to the closed configuration found in other cryptophyte species due to the insertion of a single amino acid, Asp-65, in a conserved region of the alpha chain. In the open form, the central chromophores are not in physical contact but are separated by a water-filled channel. Post-translationally, contains three phycoerythrobilin chromophores with binding mediated by both the alpha and beta subunits.

It localises to the plastid. The protein resides in the chloroplast thylakoid membrane. Light-harvesting photosynthetic tetrapyrrole chromophore-protein from the phycobiliprotein complex. The protein is Phycoerythrin alpha-3 subunit of Hemiselmis andersenii (Cryptophyte alga).